A 248-amino-acid polypeptide reads, in one-letter code: Homeotic protein ultrabithorax (248 aa).

Residues 116–125 (GTGGGGGGSA) are compositionally biased toward gly residues. The tract at residues 116-191 (GTGGGGGGSA…GSAGVVGGAG (76 aa)) is disordered. Over residues 126-139 (GSANGANNTANGQN) the composition is skewed to low complexity. Composition is skewed to gly residues over residues 140–152 (TSGG…GGGM) and 182–191 (GSAGVVGGAG). The short motif at 241-246 (FYPWMA) is the Antp-type hexapeptide element.

It belongs to the Antp homeobox family.

The protein localises to the nucleus. Its function is as follows. Sequence-specific transcription factor which is part of a developmental regulatory system that provides cells with specific positional identities on the anterior-posterior axis. Binds the consensus region 5'-TTAAT[GT][GA]-3'. This Musca domestica (House fly) protein is Homeotic protein ultrabithorax (Ubx).